A 748-amino-acid chain; its full sequence is Acetyl-CoA decarbonylase/synthase complex subunit beta 1 (748 aa).

4 residues coordinate [Ni-Fe-S] cluster: Cys-480, Cys-483, Cys-569, and Cys-571.

Belongs to the CdhC family. Monomer. The ACDS complex is made up of alpha, epsilon, beta, gamma and delta chains with a probable stoichiometry of (alpha(2)epsilon(2))(4)-beta(8)-(gamma(1)delta(1))(8) (Potential). Requires [Ni-Fe-S] cluster as cofactor.

It carries out the reaction Co(I)-[corrinoid Fe-S protein] + acetyl-CoA + H(+) = methyl-Co(III)-[corrinoid Fe-S protein] + CO + CoA. Functionally, part of a complex that catalyzes the reversible cleavage of acetyl-CoA, allowing autotrophic growth from CO(2). The alpha-epsilon complex generates CO from CO(2), while the beta subunit (this protein) combines the CO with CoA and a methyl group to form acetyl-CoA. The methyl group, which is incorporated into acetyl-CoA, is transferred to the beta subunit by a corrinoid iron-sulfur protein (the gamma-delta complex). The chain is Acetyl-CoA decarbonylase/synthase complex subunit beta 1 (cdhC1) from Methanocaldococcus jannaschii (strain ATCC 43067 / DSM 2661 / JAL-1 / JCM 10045 / NBRC 100440) (Methanococcus jannaschii).